We begin with the raw amino-acid sequence, 720 residues long: MSQTLQALADGLPVDAFAVLGPHPLADGRRQVRVLAPGAEAMGLIDSRGKLLARMQASAIDGVFEGILSIEGPYRLRIVWPDMVQEIEDPYAFAVTLDESLLLQIAAGDGQALRRALGAQHVQCGEVPGVRFAVWAPHAQRVAVVGDFNGWDVRRHPMRQRIGGFWELFLPRVEAGPRYKYAVTAADGRVLLKADPVARQTELPPATASVVPGTDTFAWTDAAWMAKRDPSAVPAPLSIYEVHAASWRRDGHNQPLDWPTLAEQLIPYVQQLRFTHIELLPITEHPFGGSWGYQPLGLYAPTARHGSPDGFAQFVDACHRAGIGVILDWVSAHFPDDAHGLAQFDGAALYEHADPREGMHRDWNTLIYNYGRPEVTAYLLGSALEWIDHYHLDGLRVDAVASMLYRDYGRAEGEWVPNAHGGRENLEAVAFLRQLNREIAAHFPGVLTIAEESTAWPGVTAAISDGGLGFTHKWNMGWMHDTLSYMQRDPAERAHHHSQLTFGLVYAFDERFVLPISHDEVVHGTGGLLGQMPGDDWRRFANLRAYLALMWAHPGDKLLFMGAEFGQWADWNHDQSLDWHLLEGARHRGVQLLVGDLNATLRRTPALYRGTHRAKGFDWSVADDARNSVLAFIRHDPDGGGVPLLAVSNLTAQPLHDYGVGVPRAGAWREILNTDSAHYGGSNLGNSGRLATEPMGMHGHAQRLRLTLPPLATIYLQAEK.

The active-site Nucleophile is Asp-398. Glu-451 serves as the catalytic Proton donor.

This sequence belongs to the glycosyl hydrolase 13 family. GlgB subfamily. As to quaternary structure, monomer.

The catalysed reaction is Transfers a segment of a (1-&gt;4)-alpha-D-glucan chain to a primary hydroxy group in a similar glucan chain.. It participates in glycan biosynthesis; glycogen biosynthesis. Functionally, catalyzes the formation of the alpha-1,6-glucosidic linkages in glycogen by scission of a 1,4-alpha-linked oligosaccharide from growing alpha-1,4-glucan chains and the subsequent attachment of the oligosaccharide to the alpha-1,6 position. This chain is 1,4-alpha-glucan branching enzyme GlgB 2, found in Xanthomonas oryzae pv. oryzae (strain KACC10331 / KXO85).